Here is a 373-residue protein sequence, read N- to C-terminus: Putative aminopeptidase SgcX (373 aa).

A divalent metal cation is bound by residues His-67 and Asp-180. Glu-212 functions as the Proton acceptor in the catalytic mechanism. A divalent metal cation contacts are provided by Glu-213, Asp-235, and His-329.

The protein belongs to the peptidase M42 family. A divalent metal cation is required as a cofactor.

This chain is Putative aminopeptidase SgcX (sgcX), found in Escherichia coli (strain K12).